The following is a 438-amino-acid chain: DEAD-box ATP-dependent RNA helicase CshB (438 aa).

The Q motif motif lies at 4–32 (TKFELYELKPFIIDAVHRLGFYEPTDIQK). Residues 35–208 (IPAVLKKESV…KKYMENPKYA (174 aa)) form the Helicase ATP-binding domain. 48–55 (SQTGTGKT) is an ATP binding site. Residues 156 to 159 (DEAD) carry the DEAD box motif. In terms of domain architecture, Helicase C-terminal spans 235 to 385 (LLFDIMSHLN…EWKKGDDRQR (151 aa)). The segment at 380–438 (GDDRQRRKKRKKTPNEADEIAHRLVKKPKKVKPGYKKKMSYEMEKIKKKQRRNQSKKRK) is disordered. Positions 392–401 (TPNEADEIAH) are enriched in basic and acidic residues. 2 stretches are compositionally biased toward basic residues: residues 402-417 (RLVK…YKKK) and 425-438 (IKKK…KKRK).

This sequence belongs to the DEAD box helicase family. As to quaternary structure, interacts with CspB when cells are transcriptionally active. May interact with RNA helicases CshA and DbpA (DeaD), may be a component of a possible RNA degradosome complex composed of rny, rnja, rnjb, pnp, pfkA and eno (although rnjA and rnjB's presence is unclear). Specifically interacts with pnp and rny.

The protein resides in the cytoplasm. Its subcellular location is the nucleoid. It catalyses the reaction ATP + H2O = ADP + phosphate + H(+). Functionally, DEAD-box RNA helicase that plays a role in 70S ribosome assembly. May work in conjunction with the cold shock proteins to ensure proper initiation of transcription at low and optimal temperatures. This chain is DEAD-box ATP-dependent RNA helicase CshB, found in Bacillus subtilis (strain 168).